The following is a 577-amino-acid chain: Cell adhesion molecule CEACAM20 (577 aa).

The first 30 residues, 1 to 30 (MELAGFHCCSWTVILLSALLPTTWRPPAAA), serve as a signal peptide directing secretion. Topologically, residues 31-430 (HFIHRADLLS…LQSSSMSPGA (400 aa)) are extracellular. Ig-like C2-type domains lie at 48–137 (PLAK…ASLT), 142–223 (PDPV…TNLS), 239–324 (PNIE…LKLT), and 329–415 (PDQV…ASVL). Cysteines 72 and 120 form a disulfide. N-linked (GlcNAc...) asparagine glycans are attached at residues N78 and N102. 2 disulfide bridges follow: C259-C307 and C358-C399. N-linked (GlcNAc...) asparagine glycosylation is present at N289. Residues 431 to 451 (IAGIVIGILVAIALAIGLGYF) traverse the membrane as a helical segment. At 452 to 577 (LYSTKDRWTR…SLYCKITPSA (126 aa)) the chain is on the cytoplasmic side. A disordered region spans residues 461–568 (RRRSASDTTS…YEKLLNSNHS (108 aa)). The span at 474–484 (IPPTSVMQSTP) shows a compositional bias: polar residues. The segment covering 516-526 (DSPEQFYEKKP) has biased composition (basic and acidic residues). Positions 536 to 551 (KPLPQIPKQPLMPPGP) are enriched in pro residues. Phosphotyrosine occurs at positions 559 and 570.

This sequence belongs to the immunoglobulin superfamily. CEA family. In terms of assembly, interacts (via extracellular domain) with PTPRH (via extracellular domain); the interaction dephosphorylates CEACAM20. Interacts (phosphorylated form) with SYK (via SH2 domains); the interaction further enhances CEACAM20 phosphorylation. In terms of processing, phosphorylated on tyrosine residues by SYK, SRC and FYN in vitro. As to expression, strongly expressed in the small intestine and colon (at protein level). Minimal expression in other tissues (at protein level). Highly expressed in cecum, colon, ileum, jejunum, and testis, and also detected at lower levels in salivary gland and thymus.

It localises to the cell projection. The protein localises to the microvillus membrane. Its subcellular location is the apical cell membrane. In terms of biological role, together with the tyrosine-protein kinase SYK, enhances production of the cytokine CXCL8/IL-8 via the NFKB pathway and may thus have a role in the intestinal immune response. The protein is Cell adhesion molecule CEACAM20 of Mus musculus (Mouse).